A 965-amino-acid polypeptide reads, in one-letter code: MPALPPVYTPSGAPSSVHAPPAVPPVPVPTQPLRSEYQTSNDACIKRLEELNIAPAAKLYPTPTEPGKCGVEAEIQTNVFGIEMHQDSLFYQYSVNITTELKNGKEVTFTKKGKDDFVVTERHDKCCAILFRALGDYEEFFKTSDSCLIYDGQSILFSNVDLFQGFREGAVKTKYMQLDGGEMDHKDLKSLPCIKLEVFPTKNPAVKFTREAVARRATDSNLDSVSLAYQQILELALTQPCLRNTARYVVFDHGKMFFIDPLGEGFEKCDVVDVGDGKQVVPGLKKTINFIEGPYGRGRSNPSVVIDGMKVAFHKNQPILDKLKEITTQPVEHGLKGLEKDRCAAVIKGLDCYSTYGGRERHHKIEGIHHEGARNARFELNDGGSCTVAQYFEDVYNITLRYPDTNLIVSKERGNINFYPMELLKISSHQRVQIPQLTSAQSQKTTKESAVLPDVRQRLILTGKNAAQISSDNEVLGKMGVSVCEDPLMVKGRSIPAVKLANAEIGANPINVKDNKWRANRFTRPATAPNVWAMYVVGTASTRITLDTLKKFADEFAAMCKSKGVNMPAPADISLIHMDAIESRLYDATKANCTFVFIITDDSITTLHQRYKMIEKDTKMIVQDMKLSKALSVINAGKRLTLENVINKTNVKLGGSNYVFVDAKKQLDSHLIIGVGISAPPAGTKYAMENKGVLNPNVIGYAYNAQHNQEFSGDFVLNSASQDTLAPIEDIVMHSLNEYQKFHDGGLPRRVIVYRTGTSEGNHGSIMAYEIPLARAAMRDFSPDIQLVYIVVSKDHSFRFFKPDLASLASRPQATSSTASRHSAMPAAPKAWDLNIAPGILVDSIVTNPACKQFFLNSHITLQGTAKTPLYTVLADDAKVSMTALEDITYKLCHLHQIVGLPTSLPTPLYVANEYAKRGRNLWNEAVALNNVPTVSGPEADRLKELTKSICYKASGDLTGRRVNA.

Positions 1 to 34 (MPALPPVYTPSGAPSSVHAPPAVPPVPVPTQPLR) are disordered. The segment covering 10-20 (PSGAPSSVHAP) has biased composition (low complexity). Pro residues predominate over residues 21–30 (PAVPPVPVPT). Residues 318-428 (PILDKLKEIT…YPMELLKISS (111 aa)) enclose the PAZ domain. A Piwi domain is found at 594 to 924 (TFVFIITDDS…YAKRGRNLWN (331 aa)).

It belongs to the argonaute family. WAGO subfamily. In terms of assembly, interacts with znfx-1; the interaction promotes the transmission of epigenetic information across generations. May interact with mina-1. In terms of tissue distribution, expressed in the hermaphrodite germline and in oocytes. Expressed at a low level in the male germline. Not expressed in the soma of hermaphrodites or males.

It localises to the cytoplasm. The protein resides in the perinuclear region. Its subcellular location is the cytoplasmic granule. Functionally, argonaute protein which is involved in the endogenous small interfering RNA (endo-siRNA) pathway and is required for RNA-mediated gene silencing (RNAi) in the germline. Interacts with secondary 22G-RNAs, which are RNA-dependent RNA polymerase-derived endo-siRNAs, typically 22 nucleotides in length with a 5'guanosine residue. Also interacts with the mRNA targets of 22G-RNAs. Associates with znfx-1 to mediate small RNA-directed transgenerational epigenetic inheritance of both germline- and soma-expressed genes. The chain is Argonaute protein wago-4 from Caenorhabditis elegans.